A 367-amino-acid chain; its full sequence is Cobalt-precorrin-5B C(1)-methyltransferase (367 aa).

Belongs to the CbiD family.

The enzyme catalyses Co-precorrin-5B + S-adenosyl-L-methionine = Co-precorrin-6A + S-adenosyl-L-homocysteine. It functions in the pathway cofactor biosynthesis; adenosylcobalamin biosynthesis; cob(II)yrinate a,c-diamide from sirohydrochlorin (anaerobic route): step 6/10. Its function is as follows. Catalyzes the methylation of C-1 in cobalt-precorrin-5B to form cobalt-precorrin-6A. This is Cobalt-precorrin-5B C(1)-methyltransferase from Priestia megaterium (Bacillus megaterium).